We begin with the raw amino-acid sequence, 211 residues long: Thiamine-phosphate synthase (211 aa).

Residues 37 to 41 (QLREK) and N69 contribute to the 4-amino-2-methyl-5-(diphosphooxymethyl)pyrimidine site. Positions 70 and 89 each coordinate Mg(2+). S108 contacts 4-amino-2-methyl-5-(diphosphooxymethyl)pyrimidine. 134-136 (TTT) serves as a coordination point for 2-[(2R,5Z)-2-carboxy-4-methylthiazol-5(2H)-ylidene]ethyl phosphate. K137 contributes to the 4-amino-2-methyl-5-(diphosphooxymethyl)pyrimidine binding site. Residues G163 and 183–184 (VS) contribute to the 2-[(2R,5Z)-2-carboxy-4-methylthiazol-5(2H)-ylidene]ethyl phosphate site.

This sequence belongs to the thiamine-phosphate synthase family. Mg(2+) serves as cofactor.

It carries out the reaction 2-[(2R,5Z)-2-carboxy-4-methylthiazol-5(2H)-ylidene]ethyl phosphate + 4-amino-2-methyl-5-(diphosphooxymethyl)pyrimidine + 2 H(+) = thiamine phosphate + CO2 + diphosphate. The catalysed reaction is 2-(2-carboxy-4-methylthiazol-5-yl)ethyl phosphate + 4-amino-2-methyl-5-(diphosphooxymethyl)pyrimidine + 2 H(+) = thiamine phosphate + CO2 + diphosphate. It catalyses the reaction 4-methyl-5-(2-phosphooxyethyl)-thiazole + 4-amino-2-methyl-5-(diphosphooxymethyl)pyrimidine + H(+) = thiamine phosphate + diphosphate. It functions in the pathway cofactor biosynthesis; thiamine diphosphate biosynthesis; thiamine phosphate from 4-amino-2-methyl-5-diphosphomethylpyrimidine and 4-methyl-5-(2-phosphoethyl)-thiazole: step 1/1. Functionally, condenses 4-methyl-5-(beta-hydroxyethyl)thiazole monophosphate (THZ-P) and 2-methyl-4-amino-5-hydroxymethyl pyrimidine pyrophosphate (HMP-PP) to form thiamine monophosphate (TMP). The protein is Thiamine-phosphate synthase of Enterococcus faecalis (strain ATCC 700802 / V583).